A 487-amino-acid polypeptide reads, in one-letter code: Glutamyl-tRNA(Gln) amidotransferase subunit A (487 aa).

Residues Lys-77 and Ser-152 each act as charge relay system in the active site. Ser-176 serves as the catalytic Acyl-ester intermediate.

It belongs to the amidase family. GatA subfamily. Heterotrimer of A, B and C subunits.

The catalysed reaction is L-glutamyl-tRNA(Gln) + L-glutamine + ATP + H2O = L-glutaminyl-tRNA(Gln) + L-glutamate + ADP + phosphate + H(+). Its function is as follows. Allows the formation of correctly charged Gln-tRNA(Gln) through the transamidation of misacylated Glu-tRNA(Gln) in organisms which lack glutaminyl-tRNA synthetase. The reaction takes place in the presence of glutamine and ATP through an activated gamma-phospho-Glu-tRNA(Gln). The polypeptide is Glutamyl-tRNA(Gln) amidotransferase subunit A (Lactiplantibacillus plantarum (strain ATCC BAA-793 / NCIMB 8826 / WCFS1) (Lactobacillus plantarum)).